A 255-amino-acid chain; its full sequence is Flap endonuclease Xni (255 aa).

Asp105 contributes to the Mg(2+) binding site. One can recognise a 5'-3' exonuclease domain in the interval 162 to 253 (EHSQFIDYLA…NLSQFRLPNP (92 aa)). 5 residues coordinate K(+): Leu172, Ala173, Pro181, Val183, and Ile186. The segment at 185-190 (GIGPKS) is interaction with DNA.

The protein belongs to the Xni family. Mg(2+) is required as a cofactor. It depends on K(+) as a cofactor.

Its function is as follows. Has flap endonuclease activity. During DNA replication, flap endonucleases cleave the 5'-overhanging flap structure that is generated by displacement synthesis when DNA polymerase encounters the 5'-end of a downstream Okazaki fragment. This chain is Flap endonuclease Xni, found in Shewanella sediminis (strain HAW-EB3).